A 202-amino-acid polypeptide reads, in one-letter code: IMP cyclohydrolase (202 aa).

The protein belongs to the archaeal IMP cyclohydrolase family.

The enzyme catalyses IMP + H2O = 5-formamido-1-(5-phospho-D-ribosyl)imidazole-4-carboxamide. It participates in purine metabolism; IMP biosynthesis via de novo pathway; IMP from 5-formamido-1-(5-phospho-D-ribosyl)imidazole-4-carboxamide: step 1/1. Its function is as follows. Catalyzes the cyclization of 5-formylamidoimidazole-4-carboxamide ribonucleotide to IMP. The polypeptide is IMP cyclohydrolase (purO) (Methanocaldococcus jannaschii (strain ATCC 43067 / DSM 2661 / JAL-1 / JCM 10045 / NBRC 100440) (Methanococcus jannaschii)).